A 396-amino-acid chain; its full sequence is L-lactate dehydrogenase (396 aa).

One can recognise an FMN hydroxy acid dehydrogenase domain in the interval methionine 1 to glycine 380. Tyrosine 24 is a substrate binding site. FMN is bound by residues serine 106 and glutamine 127. Tyrosine 129 contributes to the substrate binding site. Position 155 (threonine 155) interacts with FMN. Position 164 (arginine 164) interacts with substrate. Lysine 251 is a binding site for FMN. Histidine 275 serves as the catalytic Proton acceptor. Arginine 278 serves as a coordination point for substrate. Aspartate 306 to arginine 330 lines the FMN pocket.

Belongs to the FMN-dependent alpha-hydroxy acid dehydrogenase family. FMN is required as a cofactor.

Its subcellular location is the cell inner membrane. It catalyses the reaction (S)-lactate + A = pyruvate + AH2. Catalyzes the conversion of L-lactate to pyruvate. Is coupled to the respiratory chain. In Escherichia coli O1:K1 / APEC, this protein is L-lactate dehydrogenase.